The primary structure comprises 497 residues: Nucleoside transporter 1 (497 aa).

Topologically, residues 1 to 26 (MSLKGGTAAPAPMAPPRKWYDMTSAE) are cytoplasmic. The helical transmembrane segment at 27–47 (FYVYVVAFMCGISIMMPINAV) threads the bilayer. Residues 48-77 (FSAPSYMLEYYLYATKDPFLVPKMTNFWTN) lie on the Extracellular side of the membrane. The helical transmembrane segment at 78 to 98 (VMTYYNLISMVTSLVVEPLTL) threads the bilayer. Topologically, residues 99-107 (LKSFRKIPM) are cytoplasmic. Residues 108–128 (LVRLLGGLSVLIIEIIVLMVV) traverse the membrane as a helical segment. Topologically, residues 129-135 (PARGTTE) are extracellular. A helical transmembrane segment spans residues 136 to 156 (AGAVATMCIAGFIGGLGTSIF). At 157-172 (ESTVYGMFGAFPPSFT) the chain is on the cytoplasmic side. Residues 173–193 (SIMMGGVGISGVLTSLIQIIV) form a helical membrane-spanning segment. At 194-208 (KAALPDTYEGVKKQS) the chain is on the extracellular side. The chain crosses the membrane as a helical span at residues 209–229 (YIYYSLDVGIQAATFIALIMM). Residues 230-337 (RFNSFAQLHF…SVFSVLRSVK (108 aa)) are Cytoplasmic-facing. Positions 286 to 299 (NAEAHKDDPLAERE) are enriched in basic and acidic residues. The tract at residues 286–316 (NAEAHKDDPLAERELSEEESGDSRAVEAAGE) is disordered. A helical membrane pass occupies residues 338-358 (WMFVACGFNFLITLFLFPGIA). At 359 to 361 (TGM) the chain is on the extracellular side. Residues 362–382 (FPESKWFATVAVFIFNCCDVL) traverse the membrane as a helical segment. Residues 383-400 (GRFSSAFRITWPRRYNQR) lie on the Cytoplasmic side of the membrane. Residues 401 to 421 (WIIVAASFARVIFVPLLLLHS) form a helical membrane-spanning segment. Over 422–432 (YHYIPSEAYGY) the chain is Extracellular. A helical membrane pass occupies residues 433-453 (VMQVVFGLSSGYIASMALVLG). Residues 454–465 (PQSKGIDNDGKR) are Cytoplasmic-facing. Residues 466 to 486 (FVAGTLMGISILVGGTIGTVL) form a helical membrane-spanning segment. At 487 to 497 (SIMTQTIRETY) the chain is on the extracellular side.

This sequence belongs to the SLC29A/ENT transporter (TC 2.A.57) family.

The protein resides in the cell membrane. The enzyme catalyses adenosine(in) = adenosine(out). The catalysed reaction is hypoxanthine(out) = hypoxanthine(in). It catalyses the reaction inosine(in) = inosine(out). It carries out the reaction uridine(out) = uridine(in). The enzyme catalyses cytidine(in) = cytidine(out). In terms of biological role, nucleoside transporter with broad substrate specificity. Transports adenosine with high affinity. Can also transport hypoxanthine, inosine, uridine and cytidine. The protein is Nucleoside transporter 1 of Crithidia fasciculata.